A 165-amino-acid polypeptide reads, in one-letter code: Small ribosomal subunit protein eS10 (165 aa).

Position 12 is a phosphotyrosine (Y12). The tract at residues 90 to 165 is disordered; it reads VPATLRRSRP…FGRGRGQPPQ (76 aa). Positions 97–128 are enriched in basic and acidic residues; sequence SRPETGRPRPKGPEGERPARFTRGEADRDTYR. Residues K138 and K139 each participate in a glycyl lysine isopeptide (Lys-Gly) (interchain with G-Cter in ubiquitin) cross-link. S146 carries the phosphoserine modification. An Omega-N-methylarginine modification is found at R153. Positions 154–165 are enriched in gly residues; that stretch reads GGFGRGRGQPPQ. Symmetric dimethylarginine is present on residues R158 and R160.

The protein belongs to the eukaryotic ribosomal protein eS10 family. As to quaternary structure, component of the small ribosomal subunit. The methylated form interacts with NPM1. Methylated by PRMT5. Methylation is necessary for its interaction with NPS1, its localization in the granular component (GC) region of the nucleolus, for the proper assembly of ribosomes, protein synthesis and optimal cell proliferation. Post-translationally, monoubiquitinated by ZNF598 when a ribosome has stalled during translation of poly(A) sequences, leading to preclude synthesis of a long poly-lysine tail and initiate the ribosome quality control (RQC) pathway to degrade the potentially detrimental aberrant nascent polypeptide. Deubiquitinated by OTUD3 and USP21, antagonizing ZNF598 activity. Deubiquitinated by OTUD1, antagonizing ZNF598 activity and stimulating formation of polysomes: deubiquitination by OTUD1 promotes stability and translation of a subset mRNAs with a high abundance of rare codons can limit the translation rate. Deubiquitinated by USP10.

It is found in the cytoplasm. It localises to the nucleus. The protein resides in the nucleolus. Component of the 40S ribosomal subunit. The ribosome is a large ribonucleoprotein complex responsible for the synthesis of proteins in the cell. In Rattus norvegicus (Rat), this protein is Small ribosomal subunit protein eS10 (Rps10).